Reading from the N-terminus, the 133-residue chain is UPF0102 protein CYA_0680 (133 aa).

The protein belongs to the UPF0102 family.

In Synechococcus sp. (strain JA-3-3Ab) (Cyanobacteria bacterium Yellowstone A-Prime), this protein is UPF0102 protein CYA_0680.